Consider the following 240-residue polypeptide: LexA repressor (240 aa).

Residues 26–46 constitute a DNA-binding region (H-T-H motif); it reads FDEMKDALDLKSKSGIHRLIT. Residues Ser-161 and Lys-199 each act as for autocatalytic cleavage activity in the active site.

The protein belongs to the peptidase S24 family. As to quaternary structure, homodimer.

The catalysed reaction is Hydrolysis of Ala-|-Gly bond in repressor LexA.. Represses a number of genes involved in the response to DNA damage (SOS response), including recA and lexA. In the presence of single-stranded DNA, RecA interacts with LexA causing an autocatalytic cleavage which disrupts the DNA-binding part of LexA, leading to derepression of the SOS regulon and eventually DNA repair. The protein is LexA repressor of Methylobacterium nodulans (strain LMG 21967 / CNCM I-2342 / ORS 2060).